The chain runs to 119 residues: Flagellar transcriptional regulator FlhD (119 aa).

This sequence belongs to the FlhD family. As to quaternary structure, homodimer; disulfide-linked. Forms a heterohexamer composed of two FlhC and four FlhD subunits. Each FlhC binds a FlhD dimer, forming a heterotrimer, and a hexamer assembles by dimerization of two heterotrimers.

The protein localises to the cytoplasm. In terms of biological role, functions in complex with FlhC as a master transcriptional regulator that regulates transcription of several flagellar and non-flagellar operons by binding to their promoter region. Activates expression of class 2 flagellar genes, including fliA, which is a flagellum-specific sigma factor that turns on the class 3 genes. Also regulates genes whose products function in a variety of physiological pathways. The sequence is that of Flagellar transcriptional regulator FlhD from Serratia marcescens.